A 624-amino-acid polypeptide reads, in one-letter code: (-)-beta-phellandrene synthase 2, chloroplastic (624 aa).

The N-terminal 48 residues, 1 to 48 (MAIVSSVPLASKSCLHKSLISSIHKLKPFCRTIPTLGMSRPGKYVMPS), are a transit peptide targeting the chloroplast. Residues Asp375, Asp379, and Asp527 each contribute to the Mg(2+) site. The short motif at 375 to 379 (DDMYD) is the DDXXD motif element.

Belongs to the terpene synthase family. Tpsd subfamily. Mg(2+) is required as a cofactor. Requires Mn(2+) as cofactor.

It localises to the plastid. The protein resides in the chloroplast. It catalyses the reaction (2E)-geranyl diphosphate = (-)-beta-phellandrene + diphosphate. It functions in the pathway terpene metabolism; oleoresin biosynthesis. Terpene synthase (TPS) involved in the biosynthesis of monoterpene natural products included in conifer oleoresin secretions and volatile emissions; these compounds contribute to biotic and abiotic stress defense against herbivores and pathogens. Catalyzes the conversion of (2E)-geranyl diphosphate (GPP) to (-)-beta-phellandrene. This is (-)-beta-phellandrene synthase 2, chloroplastic from Picea sitchensis (Sitka spruce).